A 565-amino-acid chain; its full sequence is Proline--tRNA ligase (565 aa).

The protein belongs to the class-II aminoacyl-tRNA synthetase family. ProS type 1 subfamily. In terms of assembly, homodimer.

It localises to the cytoplasm. It carries out the reaction tRNA(Pro) + L-proline + ATP = L-prolyl-tRNA(Pro) + AMP + diphosphate. Its function is as follows. Catalyzes the attachment of proline to tRNA(Pro) in a two-step reaction: proline is first activated by ATP to form Pro-AMP and then transferred to the acceptor end of tRNA(Pro). As ProRS can inadvertently accommodate and process non-cognate amino acids such as alanine and cysteine, to avoid such errors it has two additional distinct editing activities against alanine. One activity is designated as 'pretransfer' editing and involves the tRNA(Pro)-independent hydrolysis of activated Ala-AMP. The other activity is designated 'posttransfer' editing and involves deacylation of mischarged Ala-tRNA(Pro). The misacylated Cys-tRNA(Pro) is not edited by ProRS. The sequence is that of Proline--tRNA ligase from Francisella tularensis subsp. novicida (strain U112).